A 339-amino-acid polypeptide reads, in one-letter code: NADH-quinone oxidoreductase subunit H (339 aa).

8 helical membrane-spanning segments follow: residues 7-27 (LFWI…AVAY), 77-97 (VLFV…WAVI), 112-132 (LLYI…AGWA), 149-169 (VVSY…AAGS), 180-200 (AGGI…VYWI), 235-255 (VFFL…AVMF), 276-296 (VPGV…YLWF), and 315-335 (VLIP…VTGF).

Belongs to the complex I subunit 1 family. In terms of assembly, NDH-1 is composed of 14 different subunits. Subunits NuoA, H, J, K, L, M, N constitute the membrane sector of the complex.

The protein localises to the cell inner membrane. It carries out the reaction a quinone + NADH + 5 H(+)(in) = a quinol + NAD(+) + 4 H(+)(out). Functionally, NDH-1 shuttles electrons from NADH, via FMN and iron-sulfur (Fe-S) centers, to quinones in the respiratory chain. The immediate electron acceptor for the enzyme in this species is believed to be ubiquinone. Couples the redox reaction to proton translocation (for every two electrons transferred, four hydrogen ions are translocated across the cytoplasmic membrane), and thus conserves the redox energy in a proton gradient. This subunit may bind ubiquinone. This chain is NADH-quinone oxidoreductase subunit H, found in Alkalilimnicola ehrlichii (strain ATCC BAA-1101 / DSM 17681 / MLHE-1).